Consider the following 595-residue polypeptide: L-allo-isoleucine:holo-[CmaA peptidyl-carrier protein] ligase (595 aa).

The region spanning 507–582 is the Carrier domain; the sequence is VVSPQAGSAV…EWVQYYATHA (76 aa). Ser-542 carries the O-(pantetheine 4'-phosphoryl)serine modification.

It belongs to the ATP-dependent AMP-binding enzyme family. In terms of assembly, homodimer. Pantetheine 4'-phosphate is required as a cofactor.

It carries out the reaction L-alloisoleucine + holo-[CmaA peptidyl-carrier protein] + ATP = L-alloisoleucyl-[CmaA peptidyl-carrier protein] + AMP + diphosphate. Functionally, involved in the biosynthesis of the phytotoxin coronatine (COR) which mimics the plant hormone jasmonic acid isoleucine and promotes opening of stomata for bacterial entry, bacterial growth in the apoplast, systemic susceptibility, and disease symptoms. CmaA catalyzes the adenylation of L-allo-isoleucine (via the A domain) and the attachment of L-allo-isoleucine to the 4'-phosphopantetheine arm located within the T domain of CmaA. It can also use L-isoleucine, L-leucine and L-valine as substrates. The sequence is that of L-allo-isoleucine:holo-[CmaA peptidyl-carrier protein] ligase from Pseudomonas savastanoi pv. glycinea (Pseudomonas syringae pv. glycinea).